The following is a 609-amino-acid chain: Meiotically up-regulated gene 28 protein (609 aa).

2 RRM domains span residues 20–103 (ISIY…YTHI) and 419–499 (CNLF…YAEK).

The protein localises to the cytoplasm. Functionally, has a role in sporulation. This Schizosaccharomyces pombe (strain 972 / ATCC 24843) (Fission yeast) protein is Meiotically up-regulated gene 28 protein (mug28).